The sequence spans 324 residues: Phosphomevalonate decarboxylase (324 aa).

The protein belongs to the phosphomevalonate decarboxylase family.

It carries out the reaction (R)-5-phosphomevalonate + ATP = isopentenyl phosphate + ADP + phosphate + CO2. Is strongly inhibited by 6-fluoromevalonate monophosphate but shows negligible inhibition by 6-fluoromevalonate diphosphate (a potent inhibitor of the classical mevalonate pathway). Catalyzes the decarboxylation of mevalonate 5-phosphate (MVAP) to isopentenyl phosphate (IP). Functions in an alternate mevalonate (MVA) pathway leading to isopentenyl diphosphate (IPP), a key precursor for the biosynthesis of isoprenoid compounds such as archaeal membrane lipids. The sequence is that of Phosphomevalonate decarboxylase (mvaD) from Haloferax volcanii (strain ATCC 29605 / DSM 3757 / JCM 8879 / NBRC 14742 / NCIMB 2012 / VKM B-1768 / DS2) (Halobacterium volcanii).